A 454-amino-acid polypeptide reads, in one-letter code: Noelin-2 (454 aa).

A signal peptide spans 1 to 20; that stretch reads MWPLTVPPPLLLLLCSGLAG. Coiled coils occupy residues 58–85 and 136–193; these read RDGR…LELR and LEQY…AQKL. 6 N-linked (GlcNAc...) asparagine glycosylation sites follow: asparagine 74, asparagine 155, asparagine 275, asparagine 310, asparagine 399, and asparagine 441. Residues 194 to 446 enclose the Olfactomedin-like domain; sequence GCGKLTGVSN…QVLYNVTLFH (253 aa). Cysteine 195 and cysteine 377 form a disulfide bridge.

In terms of assembly, peripherally associated with AMPAR complex. AMPAR complex consists of an inner core made of 4 pore-forming GluA/GRIA proteins (GRIA1, GRIA2, GRIA3 and GRIA4) and 4 major auxiliary subunits arranged in a twofold symmetry. One of the two pairs of distinct binding sites is occupied either by CNIH2, CNIH3 or CACNG2, CACNG3. The other harbors CACNG2, CACNG3, CACNG4, CACNG8 or GSG1L. This inner core of AMPAR complex is complemented by outer core constituents binding directly to the GluA/GRIA proteins at sites distinct from the interaction sites of the inner core constituents. Outer core constituents include at least PRRT1, PRRT2, CKAMP44/SHISA9, FRRS1L and NRN1. The proteins of the inner and outer core serve as a platform for other, more peripherally associated AMPAR constituents, including OLFM2. Alone or in combination, these auxiliary subunits control the gating and pharmacology of the AMPAR complex and profoundly impact their biogenesis and protein processing. Interacts with GRIA2. Interacts with OLFM1 and OLFM3. Interacts with SRF; the interaction promotes dissociation of SRF from the transcriptional repressor HEY2. Interacts with RUNX2. N-glycosylated. Expressed in aortic smooth muscle (at protein level). In the fetus, expressed in the brain and ocular tissues including lens vesicle and optic cup.

The protein resides in the secreted. The protein localises to the synapse. It is found in the membrane. Its subcellular location is the nucleus. It localises to the cytoplasm. Involved in transforming growth factor beta (TGF-beta)-induced smooth muscle differentiation. TGF-beta induces expression and translocation of OLFM2 to the nucleus where it binds to SRF, causing its dissociation from the transcriptional repressor HEY2/HERP1 and facilitating binding of SRF to target genes. Plays a role in AMPAR complex organization. Is a regulator of vascular smooth-muscle cell (SMC) phenotypic switching, that acts by promoting RUNX2 and inhibiting MYOCD binding to SRF. SMC phenotypic switching is the process through which vascular SMCs undergo transition between a quiescent contractile phenotype and a proliferative synthetic phenotype in response to pathological stimuli. SMC phenotypic plasticity is essential for vascular development and remodeling. The polypeptide is Noelin-2 (OLFM2) (Homo sapiens (Human)).